The chain runs to 469 residues: Aspartyl/glutamyl-tRNA(Asn/Gln) amidotransferase subunit B (469 aa).

This sequence belongs to the GatB/GatE family. GatB subfamily. Heterotrimer of A, B and C subunits.

It catalyses the reaction L-glutamyl-tRNA(Gln) + L-glutamine + ATP + H2O = L-glutaminyl-tRNA(Gln) + L-glutamate + ADP + phosphate + H(+). It carries out the reaction L-aspartyl-tRNA(Asn) + L-glutamine + ATP + H2O = L-asparaginyl-tRNA(Asn) + L-glutamate + ADP + phosphate + 2 H(+). Its function is as follows. Allows the formation of correctly charged Asn-tRNA(Asn) or Gln-tRNA(Gln) through the transamidation of misacylated Asp-tRNA(Asn) or Glu-tRNA(Gln) in organisms which lack either or both of asparaginyl-tRNA or glutaminyl-tRNA synthetases. The reaction takes place in the presence of glutamine and ATP through an activated phospho-Asp-tRNA(Asn) or phospho-Glu-tRNA(Gln). This is Aspartyl/glutamyl-tRNA(Asn/Gln) amidotransferase subunit B from Methanococcus maripaludis (strain C7 / ATCC BAA-1331).